Here is a 238-residue protein sequence, read N- to C-terminus: Uridylate kinase (238 aa).

K12–G15 provides a ligand contact to ATP. G54 provides a ligand contact to UMP. ATP-binding residues include G55 and R59. Residues D74 and T135 to T142 each bind UMP. ATP is bound by residues T162, Y168, and D171.

Belongs to the UMP kinase family. Homohexamer.

The protein resides in the cytoplasm. The catalysed reaction is UMP + ATP = UDP + ADP. It participates in pyrimidine metabolism; CTP biosynthesis via de novo pathway; UDP from UMP (UMPK route): step 1/1. With respect to regulation, inhibited by UTP. Catalyzes the reversible phosphorylation of UMP to UDP. This chain is Uridylate kinase, found in Bordetella bronchiseptica (strain ATCC BAA-588 / NCTC 13252 / RB50) (Alcaligenes bronchisepticus).